A 569-amino-acid polypeptide reads, in one-letter code: Membrane protein insertase YidC (569 aa).

A helical transmembrane segment spans residues 6–26; sequence FVLFLIFATSLLFLWDAWQKE. Polar residues-rich tracts occupy residues 32–52 and 62–74; these read QGPK…TAGT and LASS…STAE. Positions 32–81 are disordered; it reads QGPKTAVQGTETQANTGTAGTAETPVPGDQLASSVPQRGSTAENGAPVRA. A run of 5 helical transmembrane segments spans residues 348-368, 375-395, 442-462, 479-499, and 519-539; these read VVDY…LSLF, WGVA…PLSA, GGCL…WVLL, LSAP…MFLQ, and PLAF…YSLV.

It belongs to the OXA1/ALB3/YidC family. Type 1 subfamily. Interacts with the Sec translocase complex via SecD. Specifically interacts with transmembrane segments of nascent integral membrane proteins during membrane integration.

The protein localises to the cell inner membrane. In terms of biological role, required for the insertion and/or proper folding and/or complex formation of integral membrane proteins into the membrane. Involved in integration of membrane proteins that insert both dependently and independently of the Sec translocase complex, as well as at least some lipoproteins. Aids folding of multispanning membrane proteins. This Nitrosospira multiformis (strain ATCC 25196 / NCIMB 11849 / C 71) protein is Membrane protein insertase YidC.